A 429-amino-acid polypeptide reads, in one-letter code: tRNA (guanine(9)-N1)-methyltransferase (429 aa).

Positions 131–379 (KERKEAQRRI…AVIPIRKYAP (249 aa)) constitute an SAM-dependent MTase TRM10-type domain. S-adenosyl-L-methionine contacts are provided by residues 285–286 (LS), Gly305, 309–313 (DRNRH), Cys317, Leu331, and 344–346 (KAL). The active-site Proton acceptor is Asp309. The segment at 383 to 429 (AKRAKTETKRNEKVEEEVECTSAEGEEDIGVIEESAEVDPEDVFSNQ) is disordered. A compositionally biased stretch (basic and acidic residues) spans 386–395 (AKTETKRNEK). Over residues 396 to 429 (VEEEVECTSAEGEEDIGVIEESAEVDPEDVFSNQ) the composition is skewed to acidic residues.

Belongs to the class IV-like SAM-binding methyltransferase superfamily. TRM10 family. In terms of assembly, monomer.

The protein localises to the cytoplasm. Its subcellular location is the nucleus. The catalysed reaction is guanosine(9) in tRNA + S-adenosyl-L-methionine = N(1)-methylguanosine(9) in tRNA + S-adenosyl-L-homocysteine + H(+). S-adenosyl-L-methionine-dependent guanine N(1)-methyltransferase that catalyzes the formation of N(1)-methylguanine at position 9 (m1G9) in cytoplasmic tRNA. The polypeptide is tRNA (guanine(9)-N1)-methyltransferase (Cryptococcus neoformans var. neoformans serotype D (strain B-3501A) (Filobasidiella neoformans)).